The chain runs to 368 residues: MSDEQNKPESYSYAKAGVNIAAGNALVKAIGPLAKSTARPGADAELGGFGGFFDLKAAGYNDPLLVAGNDGVGTKVKLAIDHDRHDQIGIDLVAMCVNDLIVQGAEPLFFLDYFATGRLDNGVAERVVAGIADGCKLAGCALIGGETAEMPGMYADGDYDLAGFCVGAVERGEQLTGDRVAEGDVLLGLASSGVHSNGYSLVRRLAADKGWKLDRPALFDNERLLIDYLIEPTRIYVKSLLPFIRSGRINALAHITGGGLLENVPRVLPRGLHARIDADSWEQSRLMAFLQAQGNIEPEEMARTFNCGIGMILAVNPAQADALAADLAAAGETVYRVGTIVKGEKGCTVTGSAETWSARSAWEATHIG.

It belongs to the AIR synthase family.

It is found in the cytoplasm. The enzyme catalyses 2-formamido-N(1)-(5-O-phospho-beta-D-ribosyl)acetamidine + ATP = 5-amino-1-(5-phospho-beta-D-ribosyl)imidazole + ADP + phosphate + H(+). It participates in purine metabolism; IMP biosynthesis via de novo pathway; 5-amino-1-(5-phospho-D-ribosyl)imidazole from N(2)-formyl-N(1)-(5-phospho-D-ribosyl)glycinamide: step 2/2. The sequence is that of Phosphoribosylformylglycinamidine cyclo-ligase from Novosphingobium aromaticivorans (strain ATCC 700278 / DSM 12444 / CCUG 56034 / CIP 105152 / NBRC 16084 / F199).